A 589-amino-acid polypeptide reads, in one-letter code: Netrin-G2 (589 aa).

A signal peptide spans 1 to 17 (MLRLLALFLHCLPLVSG). Cystine bridges form between Cys22/Cys39, Cys61/Cys81, and Cys69/Cys77. A Laminin N-terminal domain is found at 35–286 (EFYACQPKVM…AISNIEVIGR (252 aa)). The interval 69–88 (CSHENPYLCSNECDASNPDL) is NGL discriminant loop I. N-linked (GlcNAc...) asparagine glycosylation is found at Asn122 and Asn128. Cysteines 171 and 195 form a disulfide. Positions 201-203 (RWA) are NGL discriminant loop II. Positions 264-267 (TYVQ) are NGL discriminant loop III. 15 disulfides stabilise this stretch: Cys287-Cys296, Cys289-Cys305, Cys307-Cys316, Cys319-Cys344, Cys413-Cys422, Cys415-Cys433, Cys436-Cys445, Cys448-Cys466, Cys469-Cys481, Cys471-Cys487, Cys489-Cys498, Cys501-Cys511, Cys516-Cys529, Cys523-Cys535, and Cys537-Cys546. Laminin EGF-like domains follow at residues 287–346 (CKCN…ACAA), 413–468 (CECY…VCIE), and 469–513 (CNCN…GCYP). Asn310 is a glycosylation site (N-linked (GlcNAc...) asparagine). Asn455 carries N-linked (GlcNAc...) asparagine glycosylation. Asn482 carries N-linked (GlcNAc...) asparagine glycosylation. The GPI-anchor amidated glycine moiety is linked to residue Gly566. Positions 567-589 (IVPRPDTLLGCLLLLGLAARLAC) are cleaved as a propeptide — removed in mature form.

Interacts with LRRC4. In terms of processing, N-glycosylated. In terms of tissue distribution, expression is restricted primarily to neurons of the CNS, particularly in the cerebral cortex, habenular nucleus and superior colliculus. Low levels in lung, kidney, heart and spleen.

It localises to the cell membrane. Involved in controlling patterning and neuronal circuit formation at the laminar, cellular, subcellular and synaptic levels. Promotes neurite outgrowth of both axons and dendrites. In Mus musculus (Mouse), this protein is Netrin-G2 (Ntng2).